The chain runs to 362 residues: 3-dehydroquinate synthase (362 aa).

NAD(+) contacts are provided by residues D71–K76, G105–D109, T129–T130, K142, K151, and C169–T172. The Zn(2+) site is built by E184, H247, and H264.

This sequence belongs to the sugar phosphate cyclases superfamily. Dehydroquinate synthase family. The cofactor is Co(2+). Zn(2+) is required as a cofactor. It depends on NAD(+) as a cofactor.

Its subcellular location is the cytoplasm. It carries out the reaction 7-phospho-2-dehydro-3-deoxy-D-arabino-heptonate = 3-dehydroquinate + phosphate. The protein operates within metabolic intermediate biosynthesis; chorismate biosynthesis; chorismate from D-erythrose 4-phosphate and phosphoenolpyruvate: step 2/7. Its function is as follows. Catalyzes the conversion of 3-deoxy-D-arabino-heptulosonate 7-phosphate (DAHP) to dehydroquinate (DHQ). This chain is 3-dehydroquinate synthase, found in Shigella boydii serotype 18 (strain CDC 3083-94 / BS512).